Consider the following 174-residue polypeptide: Adenine phosphoribosyltransferase (174 aa).

The protein belongs to the purine/pyrimidine phosphoribosyltransferase family. Homodimer.

The protein localises to the cytoplasm. The catalysed reaction is AMP + diphosphate = 5-phospho-alpha-D-ribose 1-diphosphate + adenine. The protein operates within purine metabolism; AMP biosynthesis via salvage pathway; AMP from adenine: step 1/1. Its function is as follows. Catalyzes a salvage reaction resulting in the formation of AMP, that is energically less costly than de novo synthesis. This chain is Adenine phosphoribosyltransferase, found in Lachnoclostridium phytofermentans (strain ATCC 700394 / DSM 18823 / ISDg) (Clostridium phytofermentans).